The following is a 404-amino-acid chain: MIGKIKLITRDSFNKLILPVYNPAFFIPVKGKGSRLWDQKGKEYIDFSGGIAVTSLGHCHPVLNKVLRQQSKKLWHISNIFTNEPALRLADKLISSSFASRVFFANSGAEANEAAFKLARYYSSKIYNLKKNKIISFYNSFHGRTFFTVSVGGQAKYSDFFGPKPPAIMHAKFNEINSVKSIIDDNTCAVVMELIQGEGGIVPADVAFVREIRDLCYKYNALLIFDEIQTGIGRTSKLYAYEHYEVQPDILTIAKSLGSGFPISATLTTNGIASVIKPGIHGTTYGGNPLACSIAESVVNIVNTKKFLLGVEKKSKKIISELNIINKRFGLFTEIRGKGLLIGIVLRPELSEEIHNILNALFLEGVIVLTAGKNVIRLAPSLIISKRDIVEGMKRFYCALEKCL.

Residues 108 to 109 and F141 each bind pyridoxal 5'-phosphate; that span reads GA. R144 is a N(2)-acetyl-L-ornithine binding site. Pyridoxal 5'-phosphate is bound at residue 226–229; the sequence is DEIQ. An N6-(pyridoxal phosphate)lysine modification is found at K255. N(2)-acetyl-L-ornithine is bound at residue T283. T284 contributes to the pyridoxal 5'-phosphate binding site.

It belongs to the class-III pyridoxal-phosphate-dependent aminotransferase family. ArgD subfamily. In terms of assembly, homodimer. The cofactor is pyridoxal 5'-phosphate.

It is found in the cytoplasm. The catalysed reaction is N(2)-acetyl-L-ornithine + 2-oxoglutarate = N-acetyl-L-glutamate 5-semialdehyde + L-glutamate. The enzyme catalyses N-succinyl-(2S,6S)-2,6-diaminopimelate + 2-oxoglutarate = (S)-2-succinylamino-6-oxoheptanedioate + L-glutamate. Its pathway is amino-acid biosynthesis; L-arginine biosynthesis; N(2)-acetyl-L-ornithine from L-glutamate: step 4/4. It participates in amino-acid biosynthesis; L-lysine biosynthesis via DAP pathway; LL-2,6-diaminopimelate from (S)-tetrahydrodipicolinate (succinylase route): step 2/3. Functionally, involved in both the arginine and lysine biosynthetic pathways. The protein is Acetylornithine/succinyldiaminopimelate aminotransferase of Buchnera aphidicola subsp. Schizaphis graminum (strain Sg).